Consider the following 345-residue polypeptide: S-adenosylmethionine:tRNA ribosyltransferase-isomerase (345 aa).

This sequence belongs to the QueA family. In terms of assembly, monomer.

It is found in the cytoplasm. It catalyses the reaction 7-aminomethyl-7-carbaguanosine(34) in tRNA + S-adenosyl-L-methionine = epoxyqueuosine(34) in tRNA + adenine + L-methionine + 2 H(+). Its pathway is tRNA modification; tRNA-queuosine biosynthesis. In terms of biological role, transfers and isomerizes the ribose moiety from AdoMet to the 7-aminomethyl group of 7-deazaguanine (preQ1-tRNA) to give epoxyqueuosine (oQ-tRNA). The sequence is that of S-adenosylmethionine:tRNA ribosyltransferase-isomerase from Acinetobacter baumannii (strain AB0057).